The following is a 465-amino-acid chain: Gamma-aminobutyric acid receptor subunit gamma-1 (465 aa).

A signal peptide spans 1 to 20 (MGSGKVFLFSPSLLWSQTRG). Residues 21-273 (VRLIFLLLTL…FDLSRRMGYF (253 aa)) lie on the Extracellular side of the membrane. N-linked (GlcNAc...) asparagine glycosylation is found at N50 and N127. A disulfide bond links C188 and C202. N245 is a glycosylation site (N-linked (GlcNAc...) asparagine). Residues 274-294 (TIQTYIPCILTVVLSWVSFWI) traverse the membrane as a helical segment. The Cytoplasmic segment spans residues 295–300 (NKDAVP). The chain crosses the membrane as a helical span at residues 301–320 (ARTSLGITTVLTMTTLSTIA). Residues 321–328 (RKSLPKVS) are Extracellular-facing. The chain crosses the membrane as a helical span at residues 329–349 (YVTAMDLFVSVCFIFVFAALM). The Cytoplasmic portion of the chain corresponds to 350 to 444 (EYGTLHYFTS…RIAKIDSYSR (95 aa)). The chain crosses the membrane as a helical span at residues 445-465 (IFFPTAFALFNLVYWVGYLYL).

Belongs to the ligand-gated ion channel (TC 1.A.9) family. Gamma-aminobutyric acid receptor (TC 1.A.9.5) subfamily. GABRG1 sub-subfamily. As to quaternary structure, heteropentamer, formed by a combination of alpha (GABRA1-6), beta (GABRB1-3), gamma (GABRG1-3), delta (GABRD), epsilon (GABRE), rho (GABRR1-3), pi (GABRP) and theta (GABRQ) chains, each subunit exhibiting distinct physiological and pharmacological properties. Post-translationally, may be palmitoylated. As to expression, expressed in brain.

The protein localises to the postsynaptic cell membrane. The protein resides in the cell membrane. The enzyme catalyses chloride(in) = chloride(out). Its function is as follows. Gamma subunit of the heteropentameric ligand-gated chloride channel gated by gamma-aminobutyric acid (GABA), a major inhibitory neurotransmitter in the brain. GABA-gated chloride channels, also named GABA(A) receptors (GABAAR), consist of five subunits arranged around a central pore and contain GABA active binding site(s) located at the alpha and beta subunit interface(s). When activated by GABA, GABAARs selectively allow the flow of chloride anions across the cell membrane down their electrochemical gradient. Chloride influx into the postsynaptic neuron following GABAAR opening decreases the neuron ability to generate a new action potential, thereby reducing nerve transmission. In Rattus norvegicus (Rat), this protein is Gamma-aminobutyric acid receptor subunit gamma-1.